The chain runs to 85 residues: Small ribosomal subunit protein uS17 (85 aa).

Belongs to the universal ribosomal protein uS17 family. In terms of assembly, part of the 30S ribosomal subunit.

In terms of biological role, one of the primary rRNA binding proteins, it binds specifically to the 5'-end of 16S ribosomal RNA. This chain is Small ribosomal subunit protein uS17, found in Lachnoclostridium phytofermentans (strain ATCC 700394 / DSM 18823 / ISDg) (Clostridium phytofermentans).